Here is a 119-residue protein sequence, read N- to C-terminus: C-C motif chemokine 24 (119 aa).

Positions 1-26 (MAGLMTIVTSLLFLGVCAHHIIPTGS) are cleaved as a signal peptide. Disulfide bonds link cysteine 33–cysteine 58 and cysteine 34–cysteine 74. N-linked (GlcNAc...) asparagine glycosylation is present at asparagine 115.

This sequence belongs to the intercrine beta (chemokine CC) family. In terms of processing, N-glycosylated. Activated monocytes and activated T lymphocytes.

The protein resides in the secreted. Chemotactic for resting T-lymphocytes, and eosinophils. Has lower chemotactic activity for neutrophils but none for monocytes and activated lymphocytes. Is a strong suppressor of colony formation by a multipotential hematopoietic progenitor cell line. Binds to CCR3. This Homo sapiens (Human) protein is C-C motif chemokine 24.